We begin with the raw amino-acid sequence, 1827 residues long: Phenolphthiocerol/phthiocerol polyketide synthase subunit C (1827 aa).

The region spanning 35–461 (CEPVAVVGIG…GTNAHVVVEQ (427 aa)) is the Ketosynthase family 3 (KS3) domain. Active-site for beta-ketoacyl synthase activity residues include cysteine 207, histidine 342, and histidine 383. The interval 566–876 (VFVYSGQGSQ…LAAVGVAASE (311 aa)) is acyltransferase. The active-site For malonyltransferase activity is serine 654. Positions 910-1037 (HPLLGAHIEM…AKVEQSPREC (128 aa)) are N-terminal hotdog fold. The interval 910–1076 (HPLLGAHIEM…QHHGPAFAAL (167 aa)) is dehydratase. A PKS/mFAS DH domain is found at 910–1198 (HPLLGAHIEM…LRRVERRAVP (289 aa)). Residue histidine 942 is the Proton acceptor; for dehydratase activity of the active site. The tract at residues 1050-1198 (GTTVSPADFY…LRRVERRAVP (149 aa)) is C-terminal hotdog fold. Aspartate 1111 (proton donor; for dehydratase activity) is an active-site residue. Residues 1439 to 1617 (ASYVVTGGLG…VINWGPWSEV (179 aa)) are beta-ketoacyl reductase. An NADP(+)-binding site is contributed by 1440-1485 (SYVVTGGLGGLGLVVARWLVDRGAGRVVLGGRSDPTDEQCNVLAEL). A Carrier domain is found at 1706-1785 (RAVTERMCAR…DLTADLMRQL (80 aa)). At serine 1745 the chain carries O-(pantetheine 4'-phosphoryl)serine.

Requires NADP(+) as cofactor. Pantetheine 4'-phosphate serves as cofactor.

It carries out the reaction icosanoyl-[(phenol)carboxyphthiodiolenone synthase] + 2 (S)-methylmalonyl-CoA + 3 malonyl-CoA + 5 NADPH + 10 H(+) = C32-carboxyphthiodiolenone-[(phenol)carboxyphthiodiolenone synthase] + 5 CO2 + 5 NADP(+) + 5 CoA + 2 H2O. The catalysed reaction is docosanoyl-[(phenol)carboxyphthiodiolenone synthase] + 2 (S)-methylmalonyl-CoA + 3 malonyl-CoA + 5 NADPH + 10 H(+) = C34-carboxyphthiodiolenone-[(phenol)carboxyphthiodiolenone synthase] + 5 CO2 + 5 NADP(+) + 5 CoA + 2 H2O. It catalyses the reaction 17-(4-hydroxyphenyl)heptadecanoyl-[(phenol)carboxyphthiodiolenone synthase] + 2 (S)-methylmalonyl-CoA + 3 malonyl-CoA + 5 NADPH + 10 H(+) = C35-(phenol)carboxyphthiodiolenone-[(phenol)carboxyphthiodiolenone synthase] + 5 CO2 + 5 NADP(+) + 5 CoA + 2 H2O. The enzyme catalyses 19-(4-hydroxyphenyl)nonadecanoyl-[(phenol)carboxyphthiodiolenone synthase] + 2 (S)-methylmalonyl-CoA + 3 malonyl-CoA + 5 NADPH + 10 H(+) = C37-(phenol)carboxyphthiodiolenone-[(phenol)carboxyphthiodiolenone synthase] + 5 CO2 + 5 NADP(+) + 5 CoA + 2 H2O. It functions in the pathway lipid metabolism; fatty acid biosynthesis. Functionally, part of the PpsABCDE complex involved in the biosynthesis of the lipid core common to phthiocerols and phenolphthiocerols by successive additions of malonyl-CoA or methylmalonyl-CoA extender units. PpsA can accept as substrate the activated forms of either icosanoyl (C20), docosanoyl (C22) or lignoceroyl (C24) groups from FadD26, or a (4-hydroxyphenyl)-C17 or (4-hydroxyphenyl)-C19 fatty acyl from FadD29. PpsA initiates the biosynthesis and extends its substrate using a malonyl-CoA extender unit. The PpsB and PpsC proteins add the second and third malonyl-CoA extender units. PpsD adds an (R)-methylmalonyl unit and PpsE adds a second (R)-methylmalonyl unit. The incorporation of the methylmalonyl units results in formation of two branched methyl groups in the elongated product. The polypeptide is Phenolphthiocerol/phthiocerol polyketide synthase subunit C (ppsD) (Mycobacterium bovis (strain ATCC BAA-935 / AF2122/97)).